The chain runs to 215 residues: Transmembrane protein 267 (215 aa).

3 helical membrane-spanning segments follow: residues 77 to 97 (FCEV…HFFL), 114 to 134 (PLHC…LMQL), and 178 to 198 (YWLY…IMCL).

Its subcellular location is the membrane. The sequence is that of Transmembrane protein 267 (tmem267) from Xenopus laevis (African clawed frog).